A 186-amino-acid chain; its full sequence is Hydra actinoporin-like toxin 1 (186 aa).

Positions 1–18 (MLLYICLVNLLLPLSVGA) are cleaved as a signal peptide. The N-terminal region stretch occupies residues 29–48 (KVGVDAALQQIDDVWKGKTV). Residues 158 to 160 (RAG) carry the Cell attachment site, crucial for protein stability motif.

It belongs to the actinoporin family. HALT subfamily. As to quaternary structure, octamer or nonamer in membranes. Monomer in the soluble state. In vitro, interacts with folate receptor alpha (of target organism). Expressed female germline during oogenesis.

It is found in the nematocyst. The protein resides in the secreted. It localises to the target cell membrane. Pore-forming protein that forms hydrophilic pores and causes cytolysis. Compared to equinatoxin-2 (AC P61914), it reveals lower cytolysis activity (5-12-fold difference, tested on erythrocytes), a larger pore size (probably 2-3 nm) and different affinity to membrane lipids (100-fold lower affinity to sphingomyelin). Binds to sulfatides (SFT) as well as to the two sphingolipids, lysophosphatidic acid (LPA) and sphingosine-1-phosphate (S1P). It seems to bind more strongly to LPA than to S1P and SFT. Shows cytolytic activity on HeLa cells, with a different potency than its paralogs (from most potent to less potent: HALT-4&gt;HALT-6~HALT-1&gt;HALT-3&gt;HALT-7&gt;HALT-2). Pore formation is a multi-step process that involves specific recognition of membrane lipid by a protein aromatic residues rich region, firm binding to the membrane (mainly driven by hydrophobic interactions) accompanied by the transfer of the N-terminal region to the lipid-water interface and finally pore formation after oligomerization of monomers. In vitro, binds to the folate receptor alpha (FOLR1), a GPI-anchored membrane protein that plays a major role in the uptake of folate/folic acid into cells via endocytosis, suggesting a possible involvement of this receptor in the mechanism of HALT-1-induced cell lysis. In vivo, does not cause visible paralysis in larvae of the blowfly Sarcophaga faculata, the most common arthropod prey of Hydra. The sequence is that of Hydra actinoporin-like toxin 1 from Hydra vulgaris (Hydra).